We begin with the raw amino-acid sequence, 462 residues long: SET domain-containing protein SmydA-8, isoform A (462 aa).

Residues 55 to 287 (PNWTISSSTV…KGGEITTTYT (233 aa)) form the SET domain.

It belongs to the class V-like SAM-binding methyltransferase superfamily.

The chain is SET domain-containing protein SmydA-8, isoform A from Drosophila melanogaster (Fruit fly).